The sequence spans 273 residues: MSLTNTKTGFSVKDILDLPDTNDEEGSVAEGPEEENEGPEPAKRAGPLGQGALDAVQSLPLKNPFYDSSDNPYTRWLASTEGLQYSLHGLAAGAPPQDSSSKSPEPSADESPDNDKETPGGGGDAGKKRKRRVLFSKAQTYELERRFRQQRYLSAPEREHLASLIRLTPTQVKIWFQNHRYKMKRARAEKGMEVTPLPSPRRVAVPVLVRDGKPCHALKAQDLAAATFQAGIPFSAYSAQSLQHMQYNAQYSSASTPQYPTAHPLVQAQQWTW.

Disordered regions lie at residues 1 to 56 (MSLT…LDAV) and 90 to 131 (LAAG…KRKR). The segment covering 20–38 (DTNDEEGSVAEGPEEENEG) has biased composition (acidic residues). A DNA-binding region (homeobox) is located at residues 128–187 (KRKRRVLFSKAQTYELERRFRQQRYLSAPEREHLASLIRLTPTQVKIWFQNHRYKMKRAR).

Belongs to the NK-2 homeobox family. Interacts with OLIG2.

It localises to the nucleus. Transcriptional activator involved in the development of insulin-producting beta cells in the endocrine pancreas. May also be involved in specifying diencephalic neuromeric boundaries, and in controlling the expression of genes that play a role in axonal guidance. Binds to elements within the NEUROD1 promoter. This Homo sapiens (Human) protein is Homeobox protein Nkx-2.2 (NKX2-2).